A 318-amino-acid polypeptide reads, in one-letter code: Porphobilinogen deaminase (318 aa).

The residue at position 248 (Cys248) is an S-(dipyrrolylmethanemethyl)cysteine.

Belongs to the HMBS family. Monomer. Requires dipyrromethane as cofactor.

The enzyme catalyses 4 porphobilinogen + H2O = hydroxymethylbilane + 4 NH4(+). It functions in the pathway porphyrin-containing compound metabolism; protoporphyrin-IX biosynthesis; coproporphyrinogen-III from 5-aminolevulinate: step 2/4. Functionally, tetrapolymerization of the monopyrrole PBG into the hydroxymethylbilane pre-uroporphyrinogen in several discrete steps. This Caulobacter sp. (strain K31) protein is Porphobilinogen deaminase.